Consider the following 133-residue polypeptide: L-cystatin (133 aa).

The first 19 residues, 1-19 (MEGYNILAVLIILVGVSMG), serve as a signal peptide directing secretion. At glutamine 20 the chain carries Pyrrolidone carboxylic acid. Residues 67 to 71 (QVVSG) carry the Secondary area of contact motif. Intrachain disulfides connect cysteine 85/cysteine 98 and cysteine 109/cysteine 129.

This sequence belongs to the cystatin family. As to expression, expressed in hemocytes and slightly in heart.

Its subcellular location is the cytoplasmic granule. Its function is as follows. Tight-binding inhibitor for papain. It has an important role in the protection of cells, antimicrobial activity against Gram-negative bacteria, defense against invading microbes, and response to external stimuli. The chain is L-cystatin from Tachypleus tridentatus (Japanese horseshoe crab).